Here is a 387-residue protein sequence, read N- to C-terminus: Gamma-butyrobetaine dioxygenase (387 aa).

Zn(2+) contacts are provided by C38, C40, C43, and H82. Residues H202, D204, and H347 each contribute to the Fe cation site. S351 carries the post-translational modification Phosphoserine.

It belongs to the gamma-BBH/TMLD family. The cofactor is Fe(2+). L-ascorbate is required as a cofactor.

The protein resides in the cytoplasm. It catalyses the reaction 4-(trimethylamino)butanoate + 2-oxoglutarate + O2 = carnitine + succinate + CO2. It functions in the pathway amine and polyamine biosynthesis; carnitine biosynthesis. In terms of biological role, catalyzes the formation of L-carnitine from gamma-butyrobetaine. In Pongo abelii (Sumatran orangutan), this protein is Gamma-butyrobetaine dioxygenase (BBOX1).